We begin with the raw amino-acid sequence, 142 residues long: Large ribosomal subunit protein uL11 (142 aa).

It belongs to the universal ribosomal protein uL11 family. Part of the ribosomal stalk of the 50S ribosomal subunit. Interacts with L10 and the large rRNA to form the base of the stalk. L10 forms an elongated spine to which L12 dimers bind in a sequential fashion forming a multimeric L10(L12)X complex. In terms of processing, one or more lysine residues are methylated.

Forms part of the ribosomal stalk which helps the ribosome interact with GTP-bound translation factors. The chain is Large ribosomal subunit protein uL11 from Enterobacter sp. (strain 638).